A 181-amino-acid chain; its full sequence is NADH-quinone oxidoreductase subunit B (181 aa).

The [4Fe-4S] cluster site is built by Cys45, Cys46, Cys111, and Cys140.

The protein belongs to the complex I 20 kDa subunit family. In terms of assembly, NDH-1 is composed of 14 different subunits. Subunits NuoB, C, D, E, F, and G constitute the peripheral sector of the complex. [4Fe-4S] cluster serves as cofactor.

The protein resides in the cell inner membrane. It carries out the reaction a quinone + NADH + 5 H(+)(in) = a quinol + NAD(+) + 4 H(+)(out). Functionally, NDH-1 shuttles electrons from NADH, via FMN and iron-sulfur (Fe-S) centers, to quinones in the respiratory chain. The immediate electron acceptor for the enzyme in this species is believed to be ubiquinone. Couples the redox reaction to proton translocation (for every two electrons transferred, four hydrogen ions are translocated across the cytoplasmic membrane), and thus conserves the redox energy in a proton gradient. The polypeptide is NADH-quinone oxidoreductase subunit B (nuoB) (Thermus thermophilus (strain ATCC BAA-163 / DSM 7039 / HB27)).